An 835-amino-acid polypeptide reads, in one-letter code: Translation initiation factor IF-2 (835 aa).

A disordered region spans residues 1–243; that stretch reads MSDTDGKKTL…RARQKAMGGA (243 aa). Over residues 43-67 the composition is skewed to low complexity; that stretch reads VPKPGAGKPSAGGSSPAGDPSRRPA. Basic and acidic residues-rich tracts occupy residues 85–147, 157–166, and 175–205; these read KARE…EAKR, EAPKAERSAE, and EGGD…DGRR. A tr-type G domain is found at 332 to 500; the sequence is PRPPVITIMG…AIALQAEILE (169 aa). The interval 341–348 is G1; the sequence is GHVDHGKT. 341 to 348 lines the GTP pocket; sequence GHVDHGKT. The interval 366–370 is G2; sequence GITQH. Residues 388 to 391 form a G3 region; the sequence is DTPG. Residues 388–392 and 442–445 each bind GTP; these read DTPGH and NKID. Positions 442–445 are G4; the sequence is NKID. The segment at 478 to 480 is G5; it reads SAK.

It belongs to the TRAFAC class translation factor GTPase superfamily. Classic translation factor GTPase family. IF-2 subfamily.

Its subcellular location is the cytoplasm. Functionally, one of the essential components for the initiation of protein synthesis. Protects formylmethionyl-tRNA from spontaneous hydrolysis and promotes its binding to the 30S ribosomal subunits. Also involved in the hydrolysis of GTP during the formation of the 70S ribosomal complex. This chain is Translation initiation factor IF-2, found in Ruegeria pomeroyi (strain ATCC 700808 / DSM 15171 / DSS-3) (Silicibacter pomeroyi).